Here is a 424-residue protein sequence, read N- to C-terminus: Calreticulin-2 (424 aa).

An N-terminal signal peptide occupies residues 1-22; the sequence is MAKMIPSLVSLILIGLVAIASA. Asparagine 59 carries N-linked (GlcNAc...) asparagine glycosylation. A disulfide bond links cysteine 108 and cysteine 140. The an alpha-D-glucoside site is built by tyrosine 112, lysine 114, tyrosine 131, and aspartate 138. 7 repeat units span residues 194–205, 213–224, 230–241, 248–259, 263–273, 277–287, and 291–301. Residues 194–259 form a 4 X approximate repeats region; the sequence is KQTGSLYSDW…DSKKPEDWDD (66 aa). Basic and acidic residues predominate over residues 210–220; sequence KIKDPSAKKPE. The segment at 210–279 is disordered; the sequence is KIKDPSAKKP…IPNPEYMGEW (70 aa). Residues 221–230 are compositionally biased toward acidic residues; the sequence is DWDEQEYISD. The span at 231–255 shows a compositional bias: basic and acidic residues; it reads PEDKKPDGYDDIPKEIPDTDSKKPE. Residues 263–301 are 3 X approximate repeats; that stretch reads GEWTAPTIPNPEYMGEWKPKQIKNPNYKGKWEAPLIDNP. Glutamate 321 contacts an alpha-D-glucoside. Residues 362–378 are compositionally biased toward basic and acidic residues; the sequence is FDEAEKKNEEEESKDAP. The interval 362-424 is disordered; sequence FDEAEKKNEE…EKDATAHDEL (63 aa). The span at 379 to 397 shows a compositional bias: acidic residues; sequence AESDAEDEPEDDEGGDDSD. 2 positions are modified to phosphoserine: serine 381 and serine 396. Basic and acidic residues predominate over residues 398–424; sequence SESKAEETKSVDSEETSEKDATAHDEL. Positions 421–424 match the Prevents secretion from ER motif; that stretch reads HDEL.

It belongs to the calreticulin family.

Its subcellular location is the endoplasmic reticulum lumen. Molecular calcium-binding chaperone promoting folding, oligomeric assembly and quality control in the ER via the calreticulin/calnexin cycle. This lectin may interact transiently with almost all of the monoglucosylated glycoproteins that are synthesized in the ER. This chain is Calreticulin-2 (CRT2), found in Arabidopsis thaliana (Mouse-ear cress).